The chain runs to 361 residues: Chorismate synthase (361 aa).

NADP(+)-binding residues include R48 and R54. FMN-binding positions include 125 to 127, 238 to 239, G278, 293 to 297, and R319; these read RSS, NA, and KPTSS.

Belongs to the chorismate synthase family. Homotetramer. Requires FMNH2 as cofactor.

The catalysed reaction is 5-O-(1-carboxyvinyl)-3-phosphoshikimate = chorismate + phosphate. Its pathway is metabolic intermediate biosynthesis; chorismate biosynthesis; chorismate from D-erythrose 4-phosphate and phosphoenolpyruvate: step 7/7. Functionally, catalyzes the anti-1,4-elimination of the C-3 phosphate and the C-6 proR hydrogen from 5-enolpyruvylshikimate-3-phosphate (EPSP) to yield chorismate, which is the branch point compound that serves as the starting substrate for the three terminal pathways of aromatic amino acid biosynthesis. This reaction introduces a second double bond into the aromatic ring system. The protein is Chorismate synthase of Edwardsiella ictaluri (strain 93-146).